Here is a 130-residue protein sequence, read N- to C-terminus: Insulin-like growth factor 1 (130 aa).

Residues 1–25 (MHAVSSSHLFYLAFCLLVLTSSATA) form the signal peptide. Residues 26-54 (GPETLCGAELVDALQFVCGDRGFYFNKPT) form a b region. Cystine bridges form between cysteine 31–cysteine 73, cysteine 43–cysteine 86, and cysteine 72–cysteine 77. Residues 55–66 (GYGSSSRRAPQT) form a c region. The interval 67–87 (GIVDECCFRSCDLRRLEMYCA) is a. The tract at residues 88-95 (PLKPAKSA) is d. A propeptide spans 96 to 130 (RSVRAQRHTDMPKTQKEVHLKNASRGSAGNKNYRM) (e peptide). The segment at 97–130 (SVRAQRHTDMPKTQKEVHLKNASRGSAGNKNYRM) is disordered. The span at 102–115 (RHTDMPKTQKEVHL) shows a compositional bias: basic and acidic residues. The segment covering 119-130 (SRGSAGNKNYRM) has biased composition (polar residues).

It belongs to the insulin family. Forms a ternary complex with IGFR1 and ITGAV:ITGB3. Forms a ternary complex with IGFR1 and ITGA6:ITGB4. Forms a ternary complex with IGFBP3 and ALS.

Its subcellular location is the secreted. In terms of biological role, the insulin-like growth factors, isolated from plasma, are structurally and functionally related to insulin but have a much higher growth-promoting activity. May be a physiological regulator of [1-14C]-2-deoxy-D-glucose (2DG) transport and glycogen synthesis in osteoblasts. Stimulates glucose transport in bone-derived osteoblastic (PyMS) cells and is effective at much lower concentrations than insulin, not only regarding glycogen and DNA synthesis but also with regard to enhancing glucose uptake. May play a role in synapse maturation. Ca(2+)-dependent exocytosis of IGF1 is required for sensory perception of smell in the olfactory bulb. Acts as a ligand for IGF1R. Binds to the alpha subunit of IGF1R, leading to the activation of the intrinsic tyrosine kinase activity which autophosphorylates tyrosine residues in the beta subunit thus initiating a cascade of down-stream signaling events leading to activation of the PI3K-AKT/PKB and the Ras-MAPK pathways. Binds to integrins ITGAV:ITGB3 and ITGA6:ITGB4. Its binding to integrins and subsequent ternary complex formation with integrins and IGFR1 are essential for IGF1 signaling. Induces the phosphorylation and activation of IGFR1, MAPK3/ERK1, MAPK1/ERK2 and AKT1. As part of the MAPK/ERK signaling pathway, acts as a negative regulator of apoptosis in cardiomyocytes via promotion of STUB1/CHIP-mediated ubiquitination and degradation of ICER-type isoforms of CREM. In Cavia porcellus (Guinea pig), this protein is Insulin-like growth factor 1.